The chain runs to 167 residues: Phospholipase A2 heteromtoxin (167 aa).

The Ca(2+) site is built by Trp38, Gly40, and Gly42. 5 disulfide bridges follow: Cys39-Cys61, Cys60-Cys99, Cys67-Cys92, Cys90-Cys127, and Cys132-Cys144. Residue His64 is part of the active site. Asp65 contacts Ca(2+). Positions 136–140 (GRSAR) are excised as a propeptide.

This sequence belongs to the phospholipase A2 family. Group III subfamily. In terms of assembly, heterodimer composed of a large and a small subunits; disulfide-linked. The cofactor is Ca(2+). Expressed by the venom gland.

It is found in the secreted. It catalyses the reaction a 1,2-diacyl-sn-glycero-3-phosphocholine + H2O = a 1-acyl-sn-glycero-3-phosphocholine + a fatty acid + H(+). Its function is as follows. Phospholipase toxin, which catalyzes the calcium-dependent hydrolysis of the 2-acyl groups in 3-sn-phosphoglycerides. Inhibits both skeletal (RYR1) and cardiac (RYR2) ryanodine receptors (calcium release channels). Probably blocks ryanodine receptors by generating a lipid product. The sequence is that of Phospholipase A2 heteromtoxin from Heterometrus laoticus (Thai giant scorpion).